Consider the following 425-residue polypeptide: Endoplasmic reticulum junction formation protein lunapark (425 aa).

G2 is lipidated: N-myristoyl glycine. At 2-45 (GGLFSRWRAKPSTVEVLENIDKEIQALEEFREKNQRLQKLWVGR) the chain is on the cytoplasmic side. Residues 15 to 41 (VEVLENIDKEIQALEEFREKNQRLQKL) adopt a coiled-coil conformation. Residues 46-66 (LIIYSSILYLFTCLIVYLWYL) form a helical membrane-spanning segment. Residues 67 to 77 (PDEFTARLVMT) lie on the Lumenal side of the membrane. Residues 78-98 (LPFFAFPLIIWTLRTVLIFFF) traverse the membrane as a helical segment. Topologically, residues 99–425 (SKRTERNNEA…EPSEESLVTK (327 aa)) are cytoplasmic. Positions 101 to 128 (RTERNNEALDDLKSQKKKILEEVMEKET) form a coiled coil. 5 positions are modified to phosphoserine: S114, S153, S177, S182, and S194. A disordered region spans residues 144–242 (KKAKEFEPPS…HPPGPPLARP (99 aa)). Over residues 186–195 (GPPPQGPVSP) the composition is skewed to pro residues. T211 carries the post-translational modification Phosphothreonine. S222 is modified (phosphoserine). The C4-type; plays a role in ER morphology zinc finger occupies 271–296 (CQQCFSHNGMALKEEFEYIAFRCAYC). A phosphoserine mark is found at S316, S348, and S380. Residues 320–425 (RQAVEGSSST…EPSEESLVTK (106 aa)) are disordered. Acidic residues predominate over residues 384–398 (EPAENQEETENEETS). A Phosphoserine modification is found at S411.

It belongs to the lunapark family. Homodimer; homodimerization requires the C4-type zinc finger motif and decreases during mitosis in a phosphorylation-dependent manner. In terms of processing, myristoylated; myristoylation is necessary for the endoplasmic reticulum (ER) three-way ER tubular junction formation, but is not required neither for membrane translocation, membrane topology formation, nor for the specific localization to ER membranes. Phosphorylated. Phosphorylation occurs at Ser-177, Ser-182, Ser-222, Ser-316 and Ser-380 during interphase. Phosphorylation occurs at Ser-114, Ser-153, Ser-194, Thr-211 and Ser-348 during mitosis; these phosphorylations reduce both its homodimerization and the ER three-way tubular junction formation. Post-translationally, subject to proteasomal degradation following phosphorylation during mitosis. In terms of tissue distribution, expressed in most tissues at basal level, with reinforcement in distal limb buds, genital bud, and in parts of the central nervous system.

It is found in the endoplasmic reticulum membrane. In terms of biological role, endoplasmic reticulum (ER)-shaping membrane protein that plays a role in determining ER morphology. Involved in the stabilization of nascent three-way ER tubular junctions within the ER network. May also play a role as a curvature-stabilizing protein within three-way ER tubular junction network. May be involved in limb and central nervous system development. This Mus musculus (Mouse) protein is Endoplasmic reticulum junction formation protein lunapark.